Here is a 398-residue protein sequence, read N- to C-terminus: ATP-dependent RNA helicase eIF4A (398 aa).

A Q motif motif is present at residues 25-53 (DSFDTMNLKPELLRGVYAYGFERPSAIQQ). A Helicase ATP-binding domain is found at 56-226 (IMPVIKGHDV…TKFMRDPVRI (171 aa)). 69–76 (AQSGTGKT) contributes to the ATP binding site. A DEAD box motif is present at residues 174-177 (DEAD). Positions 237–398 (GIKQFYIAVE…EMPMNVADLI (162 aa)) constitute a Helicase C-terminal domain.

It belongs to the DEAD box helicase family. eIF4A subfamily. As to quaternary structure, component of the eIF4F complex, which composition varies with external and internal environmental conditions. It is composed of at least eIF4A, eIF4E and eIF4G.

It is found in the cytoplasm. It catalyses the reaction ATP + H2O = ADP + phosphate + H(+). In terms of biological role, ATP-dependent RNA helicase which is a subunit of the eIF4F complex involved in cap recognition and is required for mRNA binding to ribosome. In the current model of translation initiation, eIF4A unwinds RNA secondary structures in the 5'-UTR of mRNAs which is necessary to allow efficient binding of the small ribosomal subunit, and subsequent scanning for the initiator codon. The protein is ATP-dependent RNA helicase eIF4A (tif1) of Sclerotinia sclerotiorum (strain ATCC 18683 / 1980 / Ss-1) (White mold).